The following is a 545-amino-acid chain: Putative serine/threonine-protein kinase L673 (545 aa).

The Cyclin N-terminal domain maps to 13–125 (RLGLVNWMLN…YKVYYLTIWK (113 aa)). The region spanning 264–543 (IDFQNKLGSG…NCLKKIKESF (280 aa)) is the Protein kinase domain. Residues 270-278 (LGSGTYGSV) and Lys291 each bind ATP. Asp384 serves as the catalytic Proton acceptor.

The protein belongs to the protein kinase superfamily. Ser/Thr protein kinase family.

It carries out the reaction L-seryl-[protein] + ATP = O-phospho-L-seryl-[protein] + ADP + H(+). It catalyses the reaction L-threonyl-[protein] + ATP = O-phospho-L-threonyl-[protein] + ADP + H(+). The sequence is that of Putative serine/threonine-protein kinase L673 from Acanthamoeba polyphaga (Amoeba).